Reading from the N-terminus, the 319-residue chain is ATP-dependent 6-phosphofructokinase (319 aa).

Glycine 11 is an ATP binding site. 21-25 (RAVVR) is an ADP binding site. ATP-binding positions include 72-73 (RS) and 102-105 (GDGS). Aspartate 103 is a Mg(2+) binding site. 125 to 127 (TID) contributes to the substrate binding site. The active-site Proton acceptor is aspartate 127. Position 154 (arginine 154) interacts with ADP. Substrate-binding positions include arginine 162 and 169 to 171 (MGR). ADP is bound by residues 185-187 (GAE), arginine 211, and 213-215 (KKH). Substrate is bound by residues glutamate 222, arginine 243, and 249–252 (HIQR).

Belongs to the phosphofructokinase type A (PFKA) family. ATP-dependent PFK group I subfamily. Prokaryotic clade 'B1' sub-subfamily. As to quaternary structure, homotetramer. It depends on Mg(2+) as a cofactor.

It localises to the cytoplasm. The enzyme catalyses beta-D-fructose 6-phosphate + ATP = beta-D-fructose 1,6-bisphosphate + ADP + H(+). It functions in the pathway carbohydrate degradation; glycolysis; D-glyceraldehyde 3-phosphate and glycerone phosphate from D-glucose: step 3/4. Its activity is regulated as follows. Allosterically activated by ADP and other diphosphonucleosides, and allosterically inhibited by phosphoenolpyruvate. Catalyzes the phosphorylation of D-fructose 6-phosphate to fructose 1,6-bisphosphate by ATP, the first committing step of glycolysis. The chain is ATP-dependent 6-phosphofructokinase from Oceanobacillus iheyensis (strain DSM 14371 / CIP 107618 / JCM 11309 / KCTC 3954 / HTE831).